A 435-amino-acid polypeptide reads, in one-letter code: Nuclear hormone receptor family member nhr-14 (435 aa).

The nuclear receptor DNA-binding region spans 17-92 (ADFCVVCGDK…DGMKPEAIQN (76 aa)). 2 consecutive NR C4-type zinc fingers follow at residues 20–40 (CVVC…CNGC) and 56–80 (CRFN…FQKC). The disordered stretch occupies residues 91-126 (QNERDRIGSTKRRKRSGANSENNSDSEGTPSPKIEV). The segment covering 107-119 (GANSENNSDSEGT) has biased composition (polar residues). Positions 131 to 355 (VSRKLIEMLL…KRDTISPKIE (225 aa)) constitute an NR LBD domain.

This sequence belongs to the nuclear hormone receptor family. In terms of tissue distribution, expressed in intestine and head neurons in young adults.

Its subcellular location is the nucleus. In terms of biological role, orphan nuclear receptor. Transcriptional repressor of intestinal metal transporter smf-3 and genes of the innate immune response. Inhibits nuclear localization of transcription factor pqm-1; in response to pathogen stress, may facilitate translocation of pqm-1, leading to transcriptional activation of genes involved in innate immunity and iron uptake. In Caenorhabditis elegans, this protein is Nuclear hormone receptor family member nhr-14 (nhr-14).